We begin with the raw amino-acid sequence, 116 residues long: Phosphoribosyl-AMP cyclohydrolase (116 aa).

D85 lines the Mg(2+) pocket. C86 is a binding site for Zn(2+). Positions 87 and 89 each coordinate Mg(2+). C102 and C109 together coordinate Zn(2+).

It belongs to the PRA-CH family. Homodimer. It depends on Mg(2+) as a cofactor. The cofactor is Zn(2+).

The protein localises to the cytoplasm. The catalysed reaction is 1-(5-phospho-beta-D-ribosyl)-5'-AMP + H2O = 1-(5-phospho-beta-D-ribosyl)-5-[(5-phospho-beta-D-ribosylamino)methylideneamino]imidazole-4-carboxamide. It functions in the pathway amino-acid biosynthesis; L-histidine biosynthesis; L-histidine from 5-phospho-alpha-D-ribose 1-diphosphate: step 3/9. Functionally, catalyzes the hydrolysis of the adenine ring of phosphoribosyl-AMP. This chain is Phosphoribosyl-AMP cyclohydrolase, found in Thermobifida fusca (strain YX).